The sequence spans 449 residues: Trigger factor (449 aa).

The region spanning 174 to 261 (GDIAVVGFKG…LKDLKTRELP (88 aa)) is the PPIase FKBP-type domain. The tract at residues 430–449 (ENSTVTEKAPDKDKPSVTDA) is disordered. The span at 437–449 (KAPDKDKPSVTDA) shows a compositional bias: basic and acidic residues.

The protein belongs to the FKBP-type PPIase family. Tig subfamily.

It is found in the cytoplasm. It catalyses the reaction [protein]-peptidylproline (omega=180) = [protein]-peptidylproline (omega=0). Functionally, involved in protein export. Acts as a chaperone by maintaining the newly synthesized protein in an open conformation. Functions as a peptidyl-prolyl cis-trans isomerase. This Synechococcus sp. (strain CC9311) protein is Trigger factor.